Here is a 103-residue protein sequence, read N- to C-terminus: Large ribosomal subunit protein bL21 (103 aa).

The protein belongs to the bacterial ribosomal protein bL21 family. As to quaternary structure, part of the 50S ribosomal subunit. Contacts protein L20.

This protein binds to 23S rRNA in the presence of protein L20. The chain is Large ribosomal subunit protein bL21 from Photobacterium profundum (strain SS9).